The sequence spans 68 residues: Ribosome modulation factor (68 aa).

This sequence belongs to the ribosome modulation factor family.

The protein resides in the cytoplasm. In terms of biological role, during stationary phase, converts 70S ribosomes to an inactive dimeric form (100S ribosomes). This chain is Ribosome modulation factor, found in Saccharophagus degradans (strain 2-40 / ATCC 43961 / DSM 17024).